Consider the following 73-residue polypeptide: Venom protein 55.1 (73 aa).

An N-terminal signal peptide occupies residues 1 to 19 (MNFLCILFVVSLISSLSKC). The residue at position 57 (P57) is a Proline amide. The propeptide occupies 61–73 (RRSFDLYALVNAK).

This sequence belongs to the diuretic hormone class 2 family. In terms of tissue distribution, expressed by the venom gland.

It is found in the secreted. Its function is as follows. Regulates fluid secretion. The protein is Venom protein 55.1 of Lychas mucronatus (Chinese swimming scorpion).